Consider the following 262-residue polypeptide: Putative glycyl-radical enzyme activating enzyme HI_0520 (262 aa).

The Radical SAM core domain occupies 20–262 (VEGQGNRSSI…CGINKILTIL (243 aa)). [4Fe-4S] cluster contacts are provided by C34, C38, and C41. S-adenosyl-L-methionine-binding positions include 40–42 (YCH), G81, and 130–132 (DLK).

The protein belongs to the organic radical-activating enzymes family. The cofactor is [4Fe-4S] cluster.

The enzyme catalyses glycyl-[protein] + reduced [flavodoxin] + S-adenosyl-L-methionine = glycin-2-yl radical-[protein] + semiquinone [flavodoxin] + 5'-deoxyadenosine + L-methionine + H(+). The sequence is that of Putative glycyl-radical enzyme activating enzyme HI_0520 from Haemophilus influenzae (strain ATCC 51907 / DSM 11121 / KW20 / Rd).